The chain runs to 77 residues: uncharacterized protein (77 aa).

2 helical membrane-spanning segments follow: residues 3–23 and 35–55; these read FNFI…SFLF and IGAI…VALL.

The protein localises to the cell membrane. This is an uncharacterized protein from Haemophilus influenzae (strain ATCC 51907 / DSM 11121 / KW20 / Rd).